A 156-amino-acid chain; its full sequence is Hemerythrin-like protein (156 aa).

Fe cation is bound by residues H54, H84, E88, H109, H113, H142, and D147.

It belongs to the hemerythrin family.

Oxygen-binding protein. The oxygen-binding site contains two iron atoms. This chain is Hemerythrin-like protein, found in Nematostella vectensis (Starlet sea anemone).